Reading from the N-terminus, the 402-residue chain is MLSPEVRALVKATAPVLKEHGEALTRHFYTRMLGGNPELRQLFNQGHQQSGQQQQALAAAVAAYAEHIDDPSVLLQVVERIAHKHVSLGVRAEHYAIVGKHLLASIREVLGEAATDELIDAWAAAYGQLADLLIGRERALYAAAASRDGGWTGWRAFKVVRKTPESAEITSFYLAPADGGATPDYLPGQYVSVRVYVPELGLMQPRQYSLSEAPGMPGQLRISVKREAGSPAGMVSGTLHNRINEGDVLDVSPPQGDFTLDAEDGRPVVLLSGGVGLTPMVSMLNHLTARDDGRQIRFVHACREAGVHAMKEHINALAAKRPNVRKAVFYERVGADDRRGVDYDYEGRVDLHAIRDEVILPDADYYLCGPLPFMQAQRRALADLGVAEHRIHAEVFGTGGVA.

Positions 1-138 (MLSPEVRALV…LADLLIGRER (138 aa)) constitute a Globin domain. H85 contributes to the heme b binding site. Catalysis depends on charge relay system residues Y95 and E137. Residues 149 to 402 (GGWTGWRAFK…AEVFGTGGVA (254 aa)) are reductase. Residues 152 to 261 (TGWRAFKVVR…SPPQGDFTLD (110 aa)) enclose the FAD-binding FR-type domain. FAD-binding positions include Y190 and 206 to 209 (RQYS). 274 to 279 (GVGLTP) lines the NADP(+) pocket. FAD is bound at residue 395 to 398 (VFGT).

The protein belongs to the globin family. Two-domain flavohemoproteins subfamily. This sequence in the C-terminal section; belongs to the flavoprotein pyridine nucleotide cytochrome reductase family. Requires heme b as cofactor. It depends on FAD as a cofactor.

It carries out the reaction 2 nitric oxide + NADPH + 2 O2 = 2 nitrate + NADP(+) + H(+). The catalysed reaction is 2 nitric oxide + NADH + 2 O2 = 2 nitrate + NAD(+) + H(+). Its function is as follows. Is involved in NO detoxification in an aerobic process, termed nitric oxide dioxygenase (NOD) reaction that utilizes O(2) and NAD(P)H to convert NO to nitrate, which protects the bacterium from various noxious nitrogen compounds. Therefore, plays a central role in the inducible response to nitrosative stress. This Bordetella pertussis (strain Tohama I / ATCC BAA-589 / NCTC 13251) protein is Flavohemoprotein.